The chain runs to 231 residues: Ribonuclease 3 (231 aa).

An RNase III domain is found at 12–139 (LKAFLQKNNI…LIAAIYLDQG (128 aa)). E52 contributes to the Mg(2+) binding site. D56 is a catalytic residue. D125 and E128 together coordinate Mg(2+). E128 is an active-site residue. Residues 165 to 231 (DPKSELQEYF…AANALSKLKT (67 aa)) enclose the DRBM domain.

Belongs to the ribonuclease III family. In terms of assembly, homodimer. The cofactor is Mg(2+).

Its subcellular location is the cytoplasm. The catalysed reaction is Endonucleolytic cleavage to 5'-phosphomonoester.. Functionally, digests double-stranded RNA. Involved in the processing of primary rRNA transcript to yield the immediate precursors to the large and small rRNAs (23S and 16S). Processes some mRNAs, and tRNAs when they are encoded in the rRNA operon. Processes pre-crRNA and tracrRNA of type II CRISPR loci if present in the organism. The chain is Ribonuclease 3 from Mycoplasmopsis synoviae (strain 53) (Mycoplasma synoviae).